A 585-amino-acid polypeptide reads, in one-letter code: Lipoprotein LpqB (585 aa).

Positions 1-18 are cleaved as a signal peptide; sequence MKRLLTVLVVGLVALVSG. Cys-19 carries the N-palmitoyl cysteine lipid modification. Cys-19 is lipidated: S-diacylglycerol cysteine. Positions 24-46 are disordered; the sequence is SSSSPQAIGTVERPAPPSLPKPT. Over residues 37–46 the composition is skewed to pro residues; the sequence is PAPPSLPKPT.

This sequence belongs to the LpqB lipoprotein family. In terms of assembly, interacts with MtrB, probably extracytoplasmically via its sensor domain.

It localises to the cell membrane. It is found in the secreted. The protein localises to the cell wall. May modulate activity of the MtrAB system in controlling homeostasis of the cell wall and cell division. The sequence is that of Lipoprotein LpqB from Mycolicibacterium smegmatis (strain ATCC 700084 / mc(2)155) (Mycobacterium smegmatis).